The primary structure comprises 135 residues: Small ribosomal subunit protein bS16 (135 aa).

Basic and acidic residues predominate over residues 105 to 120 (DEKKKPVLKPKTEKAA). Residues 105 to 135 (DEKKKPVLKPKTEKAAPEAAAPEAEATEEQA) form a disordered region.

The protein belongs to the bacterial ribosomal protein bS16 family.

The sequence is that of Small ribosomal subunit protein bS16 from Clavibacter sepedonicus (Clavibacter michiganensis subsp. sepedonicus).